The chain runs to 414 residues: Arrestin domain-containing protein 3 (414 aa).

Short sequence motifs (PPxY motif) lie at residues 346–349 (PPSY) and 391–394 (PPLY). The disordered stretch occupies residues 393-414 (LYSEIDPNPDQSSEDRPSCPSR). Residues 405–414 (SEDRPSCPSR) are compositionally biased toward basic and acidic residues.

Belongs to the arrestin family. As to quaternary structure, interacts (via PPxY motifs) with NEDD4 (via WW domains). Interacts with ADRB2. Interacts with ADRB3. Interacts with HGS (via PPxY motifs). Does not bind TXN (thioredoxin). Interacts with ITCH.

It localises to the cytoplasm. The protein localises to the cell membrane. The protein resides in the lysosome. It is found in the endosome. Its subcellular location is the early endosome. Adapter protein that plays a role in regulating cell-surface expression of adrenergic receptors and probably also other G protein-coupled receptors. Plays a role in NEDD4-mediated ubiquitination and endocytosis af activated ADRB2 and subsequent ADRB2 degradation. May recruit NEDD4 to ADRB2. Alternatively, may function as adapter protein that does not play a major role in recruiting NEDD4 to ADRB2, but rather plays a role in a targeting ADRB2 to endosomes. In Rattus norvegicus (Rat), this protein is Arrestin domain-containing protein 3 (Arrdc3).